The following is a 901-amino-acid chain: Protein translocase subunit SecA (901 aa).

Residues Gln87, 105–109 (GEGKT), and Asp512 each bind ATP. Zn(2+) contacts are provided by Cys885, Cys887, Cys896, and His897.

This sequence belongs to the SecA family. Monomer and homodimer. Part of the essential Sec protein translocation apparatus which comprises SecA, SecYEG and auxiliary proteins SecDF-YajC and YidC. The cofactor is Zn(2+).

Its subcellular location is the cell inner membrane. The protein resides in the cytoplasm. The catalysed reaction is ATP + H2O + cellular proteinSide 1 = ADP + phosphate + cellular proteinSide 2.. Functionally, part of the Sec protein translocase complex. Interacts with the SecYEG preprotein conducting channel. Has a central role in coupling the hydrolysis of ATP to the transfer of proteins into and across the cell membrane, serving both as a receptor for the preprotein-SecB complex and as an ATP-driven molecular motor driving the stepwise translocation of polypeptide chains across the membrane. The sequence is that of Protein translocase subunit SecA from Salmonella agona (strain SL483).